The sequence spans 237 residues: Cysteine-rich venom protein ENH2 (237 aa).

The N-terminal stretch at 1–18 is a signal peptide; that stretch reads MIVFILLSLAAVLQQFVA. Residues 37 to 165 form the SCP domain; it reads VDMHNSFRRS…PYNYFYVCQY (129 aa). Intrachain disulfides connect C74-C152, C91-C166, C147-C163, C185-C192, C188-C197, C210-C228, and C219-C232. The ShKT domain occupies 201–237; it reads CPITNTFTNCDSLLQQNSCEDSYIKTNCGASCFGQDK.

This sequence belongs to the CRISP family. As to expression, expressed by the venom gland.

The protein resides in the secreted. Functionally, blocks contraction of smooth muscle elicited by high potassium-induced depolarization, but does not block caffeine-stimulated contraction. May target voltage-gated calcium channels on smooth muscle. This is Cysteine-rich venom protein ENH2 from Pseudoferania polylepis (Macleay's water snake).